Here is a 338-residue protein sequence, read N- to C-terminus: Ketol-acid reductoisomerase (NADP(+)) (338 aa).

The KARI N-terminal Rossmann domain maps to 1-181; sequence MKVYYDKDCN…GGGRSGIIET (181 aa). NADP(+) is bound by residues 24-27, Arg-47, Ser-50, Ser-52, and 82-85; these read YGSQ and DETQ. The active site involves His-107. Position 133 (Gly-133) interacts with NADP(+). The region spanning 182 to 327 is the KARI C-terminal knotted domain; it reads NFREETETDL…ARLRAMMPWI (146 aa). The Mg(2+) site is built by Asp-190, Glu-194, Glu-226, and Glu-230. Ser-251 contacts substrate.

Belongs to the ketol-acid reductoisomerase family. It depends on Mg(2+) as a cofactor.

The catalysed reaction is (2R)-2,3-dihydroxy-3-methylbutanoate + NADP(+) = (2S)-2-acetolactate + NADPH + H(+). It carries out the reaction (2R,3R)-2,3-dihydroxy-3-methylpentanoate + NADP(+) = (S)-2-ethyl-2-hydroxy-3-oxobutanoate + NADPH + H(+). The protein operates within amino-acid biosynthesis; L-isoleucine biosynthesis; L-isoleucine from 2-oxobutanoate: step 2/4. Its pathway is amino-acid biosynthesis; L-valine biosynthesis; L-valine from pyruvate: step 2/4. Functionally, involved in the biosynthesis of branched-chain amino acids (BCAA). Catalyzes an alkyl-migration followed by a ketol-acid reduction of (S)-2-acetolactate (S2AL) to yield (R)-2,3-dihydroxy-isovalerate. In the isomerase reaction, S2AL is rearranged via a Mg-dependent methyl migration to produce 3-hydroxy-3-methyl-2-ketobutyrate (HMKB). In the reductase reaction, this 2-ketoacid undergoes a metal-dependent reduction by NADPH to yield (R)-2,3-dihydroxy-isovalerate. The chain is Ketol-acid reductoisomerase (NADP(+)) from Pelobacter propionicus (strain DSM 2379 / NBRC 103807 / OttBd1).